The chain runs to 1002 residues: Isoleucine--tRNA ligase, mitochondrial (1002 aa).

The 'HIGH' region motif lies at 94–104 (PYANGELHLGH). The 'KMSKS' region motif lies at 668–672 (KMSKS). Residue Lys671 participates in ATP binding.

The protein belongs to the class-I aminoacyl-tRNA synthetase family.

The protein localises to the mitochondrion matrix. It catalyses the reaction tRNA(Ile) + L-isoleucine + ATP = L-isoleucyl-tRNA(Ile) + AMP + diphosphate. The protein is Isoleucine--tRNA ligase, mitochondrial (ISM1) of Saccharomyces cerevisiae (strain ATCC 204508 / S288c) (Baker's yeast).